Reading from the N-terminus, the 564-residue chain is Probable diguanylate cyclase DgcQ (564 aa).

2 helical membrane passes run 20–40 (LGPGHIVNLCFIVVLLFSTLL) and 360–380 (IALTLLWALFTTMLLISWYVI). Residues 428–563 (HPFSVIQVDL…GRNRVFASDN (136 aa)) enclose the GGDEF domain. Asp436 contributes to the Mg(2+) binding site. The substrate site is built by Asn444, His449, and Asp453. Glu479 contributes to the Mg(2+) binding site. Glu479 acts as the Proton acceptor in catalysis.

Homodimer. It depends on Mg(2+) as a cofactor.

The protein localises to the cell inner membrane. It catalyses the reaction 2 GTP = 3',3'-c-di-GMP + 2 diphosphate. It participates in glycan metabolism; bacterial cellulose biosynthesis. Its pathway is purine metabolism; 3',5'-cyclic di-GMP biosynthesis. Its function is as follows. Catalyzes the synthesis of cyclic-di-GMP (c-di-GMP) via the condensation of 2 GTP molecules. Cyclic-di-GMP is a second messenger which controls cell surface-associated traits in bacteria. Involved in the regulation of cellulose production. In Shigella dysenteriae serotype 1 (strain Sd197), this protein is Probable diguanylate cyclase DgcQ.